Here is a 43-residue protein sequence, read N- to C-terminus: Augerpeptide hhe9.2 (43 aa).

Positions 2 to 40 (EEVGCFPNVCKNDGNCSIETSTGMTRCQCLEGYTGHVCE) constitute an EGF-like domain. Disulfide bonds link C6–C28, C11–C30, and C17–C39.

In terms of tissue distribution, expressed by the venom duct.

It localises to the secreted. This is Augerpeptide hhe9.2 from Hastula hectica (Sea snail).